Reading from the N-terminus, the 620-residue chain is Cryptochrome-1 (620 aa).

Residues 3 to 132 (VNAVHWFRKG…EVIVRISHTL (130 aa)) enclose the Photolyase/cryptochrome alpha/beta domain. Short sequence motifs (LIR) lie at residues 50-54 (NRWRF), 82-87 (DVFPRL), and 151-156 (KRFQTL). Serine 252 contributes to the FAD binding site. Short sequence motifs (LIR) lie at residues 255-260 (LRFGCL), 271-276 (DLYKKV), 285-290 (SLYGQL), and 335-339 (TGFPW). Residue glutamine 289 participates in FAD binding. Histidine 355 provides a ligand contact to FAD. The short motif at 379 to 384 (KVFEEL) is the LIR 8 element. 387 to 389 (DAD) is a binding site for FAD. 5 consecutive short sequence motifs (LIR) follow at residues 395–400 (GSWMWL), 411–416 (HCYCPV), 430–435 (RRYLPV), 486–491 (QIYQQL), and 492–497 (SRYRGL). Residues 593–620 (TGISAGKRPNPEEETQSVGPKVQRQSTN) are disordered.

The protein belongs to the DNA photolyase class-1 family. Component of the circadian core oscillator, which includes the CRY proteins, CLOCK or NPAS2, BMAL1 or BMAL2, CSNK1E, and the PER proteins. It depends on FAD as a cofactor. (6R)-5,10-methylene-5,6,7,8-tetrahydrofolate serves as cofactor. As to expression, expressed in the retina.

It localises to the cytoplasm. It is found in the nucleus. In terms of biological role, transcriptional repressor which forms a core component of the circadian clock. The circadian clock, an internal time-keeping system, regulates various physiological processes through the generation of approximately 24 hour circadian rhythms in gene expression, which are translated into rhythms in metabolism and behavior. It is derived from the Latin roots 'circa' (about) and 'diem' (day) and acts as an important regulator of a wide array of physiological functions including metabolism, sleep, body temperature, blood pressure, endocrine, immune, cardiovascular, and renal function. Consists of two major components: the central clock, residing in the suprachiasmatic nucleus (SCN) of the brain, and the peripheral clocks that are present in nearly every tissue and organ system. Both the central and peripheral clocks can be reset by environmental cues, also known as Zeitgebers (German for 'timegivers'). The predominant Zeitgeber for the central clock is light, which is sensed by retina and signals directly to the SCN. The central clock entrains the peripheral clocks through neuronal and hormonal signals, body temperature and feeding-related cues, aligning all clocks with the external light/dark cycle. Circadian rhythms allow an organism to achieve temporal homeostasis with its environment at the molecular level by regulating gene expression to create a peak of protein expression once every 24 hours to control when a particular physiological process is most active with respect to the solar day. Transcription and translation of core clock components (CLOCK, NPAS2, BMAL1, BMAL2, PER1, PER2, PER3, CRY1 and CRY2) plays a critical role in rhythm generation, whereas delays imposed by post-translational modifications (PTMs) are important for determining the period (tau) of the rhythms (tau refers to the period of a rhythm and is the length, in time, of one complete cycle). A diurnal rhythm is synchronized with the day/night cycle, while the ultradian and infradian rhythms have a period shorter and longer than 24 hours, respectively. Disruptions in the circadian rhythms contribute to the pathology of cardiovascular diseases, cancer, metabolic syndromes and aging. A transcription/translation feedback loop (TTFL) forms the core of the molecular circadian clock mechanism. Transcription factors, CLOCK or NPAS2 and BMAL1 or BMAL2, form the positive limb of the feedback loop, act in the form of a heterodimer and activate the transcription of core clock genes and clock-controlled genes (involved in key metabolic processes), harboring E-box elements (5'-CACGTG-3') within their promoters. The core clock genes: PER1/2/3 and CRY1/2 which are transcriptional repressors form the negative limb of the feedback loop and interact with the CLOCK|NPAS2-BMAL1|BMAL2 heterodimer inhibiting its activity and thereby negatively regulating their own expression. This heterodimer also activates nuclear receptors NR1D1/2 and RORA/B/G, which form a second feedback loop and which activate and repress BMAL1 transcription, respectively. CRY1 and CRY2 have redundant functions but also differential and selective contributions at least in defining the pace of the SCN circadian clock and its circadian transcriptional outputs. More potent transcriptional repressor in cerebellum and liver than CRY2, though more effective in lengthening the period of the SCN oscillator. On its side, CRY2 seems to play a critical role in tuning SCN circadian period by opposing the action of CRY1. With CRY2, is dispensable for circadian rhythm generation but necessary for the development of intercellular networks for rhythm synchrony. Capable of translocating circadian clock core proteins such as PER proteins to the nucleus. Interacts with CLOCK-BMAL1 independently of PER proteins and is found at CLOCK-BMAL1-bound sites, suggesting that CRY may act as a molecular gatekeeper to maintain CLOCK-BMAL1 in a poised and repressed state until the proper time for transcriptional activation. The polypeptide is Cryptochrome-1 (CRY1) (Erithacus rubecula (European robin)).